A 286-amino-acid polypeptide reads, in one-letter code: Putative short-chain type dehydrogenase/reductase Rv0148 (286 aa).

Position 11–35 (11–35) interacts with NAD(+); the sequence is VTGAGGGLGREYALTLAGEGASVVV. Serine 151 contributes to the substrate binding site. Tyrosine 164 (proton acceptor) is an active-site residue. Lysine 280 is covalently cross-linked (Isoglutamyl lysine isopeptide (Lys-Gln) (interchain with Q-Cter in protein Pup)).

Belongs to the short-chain dehydrogenases/reductases (SDR) family. Post-translationally, pupylated at Lys-280 by the prokaryotic ubiquitin-like protein Pup, which probably leads to its degradation by the proteasome.

The protein is Putative short-chain type dehydrogenase/reductase Rv0148 of Mycobacterium tuberculosis (strain ATCC 25618 / H37Rv).